Consider the following 510-residue polypeptide: Calcium-dependent lipid-binding protein (510 aa).

Residues 1–21 (MGLISGILFGIIFGVALMAGW) traverse the membrane as a helical segment. SMP-LTD domains are found at residues 66–248 (AFEQ…VPIG) and 66–250 (AFEQ…IGGI). A phospholipid binding region spans residues 226-488 (DDTVDTIVKD…FMGRTITGQS (263 aa)). C2 domains are found at residues 242–362 (RIVV…ELEL) and 246–364 (PIGG…ELNL). Ca(2+) is bound by residues Lys-278, Glu-279, Asp-285, Asp-333, Lys-334, Asp-335, Asp-339, and Glu-340. Residues 390–417 (EFNKEEQMAALEDEKKIMEERKRLKEAG) adopt a coiled-coil conformation. The region spanning 461 to 500 (MVGSGFGAVGSGLSKAGRFMGRTITGQSSKRSGSSTPVNT) is the C2 3 domain. The tract at residues 484–510 (ITGQSSKRSGSSTPVNTVPENDGAKQQ) is disordered.

The protein belongs to the synaptotagmin family. In terms of assembly, interacts with the biotrophic pathogenic fungi Microbotryum violaceum effector MVLG_01732. The cofactor is Ca(2+). As to expression, mostly expressed in rosette leaves and flowers, to lower extent, in cauline leaves, roots and stems, and, at low levels, in siliques.

The protein resides in the nucleus membrane. May be involved in membrane trafficking. Acts as a repressor of abiotic stress (e.g. drought and salt) responses by binding specifically to the promoter of THAS1 to regulate its transcription. Binds to membrane lipid ceramides. The sequence is that of Calcium-dependent lipid-binding protein from Arabidopsis thaliana (Mouse-ear cress).